Here is a 505-residue protein sequence, read N- to C-terminus: Protein amnionless (505 aa).

Positions 1-20 (MGLHWQWLIWALVGLHVALA) are cleaved as a signal peptide. Residues 21–344 (TKWYGGGMDF…RPYNPNVSFS (324 aa)) are Extracellular-facing. The helical transmembrane segment at 345–365 (SIVLILFCMALVGLVSVVILA) threads the bilayer. Residues 366–505 (HFMPENPYLN…CEADTDEETI (140 aa)) are Cytoplasmic-facing. The disordered stretch occupies residues 451 to 482 (GALEEAAKESQEQDEILSVPKMETGDLDARSV). The segment covering 473–482 (ETGDLDARSV) has biased composition (basic and acidic residues).

Specifically expressed in nephrocytes.

The protein localises to the cell membrane. Its function is as follows. Required in the nephrocyte for normal uptake of proteins and elimination of toxins, and for maintenance of endocytic trafficking structures. May function together with Cubn. The sequence is that of Protein amnionless from Drosophila melanogaster (Fruit fly).